The chain runs to 414 residues: MLQKPRGTQDFFLDEAKLWNKVETKLKEILDQFNYSEIRTPMFESKELFIRSIGSTTDIVSKEMYEFVDKKNRSLVLKPEGTASVVRAVIENKLYAEENLPLKVYYISPMFRYERPQNGRYRQFHQLGIEVFGSDSIQQDYEVLNIATKIINQFKLNKNIKIYTNFLITGKNREDYILELKKYLSDFKLCNDCNTRLEKNPLRVLDCKIDDKQFKNVPSMQDFLTKEQKTRYDQTLELFKKTNISVIHDDKLVRGLDYYTGFIFEIKYLNNNNEQTIIAGGRYNNLVNEIGNINLAACGFGMGLERFINIIKEQNSSLVNQKTNIDLYTICIDDLAIELNQQILDLTRSIGLKADSNYYHLSLKSALKKADKLNPKYVIILGSNEAKTNEFIIKDQINKTQIKTTLTKFIKDLK.

It belongs to the class-II aminoacyl-tRNA synthetase family. In terms of assembly, homodimer.

The protein resides in the cytoplasm. It catalyses the reaction tRNA(His) + L-histidine + ATP = L-histidyl-tRNA(His) + AMP + diphosphate + H(+). This is Histidine--tRNA ligase from Mycoplasma mycoides subsp. mycoides SC (strain CCUG 32753 / NCTC 10114 / PG1).